Consider the following 249-residue polypeptide: Hydroxyacylglutathione hydrolase (249 aa).

7 residues coordinate Zn(2+): His53, His55, Asp57, His58, His110, Asp127, and His165.

The protein belongs to the metallo-beta-lactamase superfamily. Glyoxalase II family. Monomer. Zn(2+) serves as cofactor.

It catalyses the reaction an S-(2-hydroxyacyl)glutathione + H2O = a 2-hydroxy carboxylate + glutathione + H(+). It functions in the pathway secondary metabolite metabolism; methylglyoxal degradation; (R)-lactate from methylglyoxal: step 2/2. In terms of biological role, thiolesterase that catalyzes the hydrolysis of S-D-lactoyl-glutathione to form glutathione and D-lactic acid. The chain is Hydroxyacylglutathione hydrolase from Buchnera aphidicola subsp. Baizongia pistaciae (strain Bp).